We begin with the raw amino-acid sequence, 367 residues long: uncharacterized protein (367 aa).

This is an uncharacterized protein from Arabidopsis thaliana (Mouse-ear cress).